A 157-amino-acid chain; its full sequence is S-ribosylhomocysteine lyase (157 aa).

3 residues coordinate Fe cation: His-54, His-58, and Cys-124.

Belongs to the LuxS family. As to quaternary structure, homodimer. Fe cation is required as a cofactor.

The catalysed reaction is S-(5-deoxy-D-ribos-5-yl)-L-homocysteine = (S)-4,5-dihydroxypentane-2,3-dione + L-homocysteine. In terms of biological role, involved in the synthesis of autoinducer 2 (AI-2) which is secreted by bacteria and is used to communicate both the cell density and the metabolic potential of the environment. The regulation of gene expression in response to changes in cell density is called quorum sensing. Catalyzes the transformation of S-ribosylhomocysteine (RHC) to homocysteine (HC) and 4,5-dihydroxy-2,3-pentadione (DPD). This is S-ribosylhomocysteine lyase from Lactobacillus helveticus (strain DPC 4571).